The following is a 938-amino-acid chain: Nitrate reductase (938 aa).

The region spanning 1–64 (MSVVQSSCAY…RLLDSLAQPN (64 aa)) is the 4Fe-4S Mo/W bis-MGD-type domain. 4 residues coordinate [4Fe-4S] cluster: Cys-8, Cys-11, Cys-15, and Cys-50.

It belongs to the prokaryotic molybdopterin-containing oxidoreductase family. NasA/NapA/NarB subfamily. [4Fe-4S] cluster serves as cofactor. It depends on Mo-bis(molybdopterin guanine dinucleotide) as a cofactor.

The protein resides in the cytoplasm. The catalysed reaction is nitrate + a quinol = a quinone + nitrite + H2O. It functions in the pathway nitrogen metabolism; nitrate reduction (assimilation). Functionally, nitrate reductase is a key enzyme involved in the first step of nitrate assimilation in plants, fungi and bacteria. The sequence is that of Nitrate reductase from Shewanella frigidimarina (strain NCIMB 400).